The following is a 1040-amino-acid chain: Contactin-2 (1040 aa).

A signal peptide spans 1–30 (MGTATRRKPHLLLVAAVALVSSSAWSSALG). Ig-like C2-type domains follow at residues 43–128 (PLSV…AILR), 133–222 (QEFS…SVFS), 239–322 (PSIK…GRII), 327–411 (PEWL…AELA), 417–504 (PDFR…GILS), and 509–603 (TKIT…ATVL). Intrachain disulfides connect cysteine 61-cysteine 111, cysteine 155-cysteine 207, cysteine 261-cysteine 306, and cysteine 348-cysteine 395. 3 N-linked (GlcNAc...) asparagine glycosylation sites follow: asparagine 76, asparagine 198, and asparagine 204. Asparagine 461, asparagine 477, asparagine 498, and asparagine 525 each carry an N-linked (GlcNAc...) asparagine glycan. Fibronectin type-III domains follow at residues 610–708 (PPGG…TREA), 713–810 (APSG…SAEE), 815–910 (APTK…TMKP), and 915–1006 (PPGN…NGGT). The disordered stretch occupies residues 694 to 720 (GEPSGPSSKIRTREAAPSVAPSGLSGG). A Cell attachment site motif is present at residues 794-796 (RGD). 4 N-linked (GlcNAc...) asparagine glycosylation sites follow: asparagine 830, asparagine 904, asparagine 918, and asparagine 940. A disordered region spans residues 894–919 (AGTGPASPSANATTMKPPPRRPPGNI). Residue asparagine 1012 is the site of GPI-anchor amidated asparagine attachment. Positions 1013-1040 (MAVRPAPHPGTVISHSVAMLILIGSLEL) are cleaved as a propeptide — removed in mature form.

This sequence belongs to the immunoglobulin superfamily. Contactin family.

The protein resides in the cell membrane. In conjunction with another transmembrane protein, CNTNAP2, contributes to the organization of axonal domains at nodes of Ranvier by maintaining voltage-gated potassium channels at the juxtaparanodal region. May be involved in cell adhesion. The polypeptide is Contactin-2 (CNTN2) (Homo sapiens (Human)).